The following is a 148-amino-acid chain: Antitoxin Xre (148 aa).

Belongs to the MbcA/ParS/Xre antitoxin family. As to quaternary structure, homodimer. Forms a complex with cognate toxin Rse.

Functionally, antitoxin component of a type II toxin-antitoxin (TA) system. Neutralizes the NAD(+) depleting activity of cognate toxin Res. In Photorhabdus laumondii subsp. laumondii (strain DSM 15139 / CIP 105565 / TT01) (Photorhabdus luminescens subsp. laumondii), this protein is Antitoxin Xre.